A 177-amino-acid chain; its full sequence is ATP synthase subunit delta (177 aa).

It belongs to the ATPase delta chain family. In terms of assembly, F-type ATPases have 2 components, F(1) - the catalytic core - and F(0) - the membrane proton channel. F(1) has five subunits: alpha(3), beta(3), gamma(1), delta(1), epsilon(1). F(0) has three main subunits: a(1), b(2) and c(10-14). The alpha and beta chains form an alternating ring which encloses part of the gamma chain. F(1) is attached to F(0) by a central stalk formed by the gamma and epsilon chains, while a peripheral stalk is formed by the delta and b chains.

It is found in the cell inner membrane. Its function is as follows. F(1)F(0) ATP synthase produces ATP from ADP in the presence of a proton or sodium gradient. F-type ATPases consist of two structural domains, F(1) containing the extramembraneous catalytic core and F(0) containing the membrane proton channel, linked together by a central stalk and a peripheral stalk. During catalysis, ATP synthesis in the catalytic domain of F(1) is coupled via a rotary mechanism of the central stalk subunits to proton translocation. In terms of biological role, this protein is part of the stalk that links CF(0) to CF(1). It either transmits conformational changes from CF(0) to CF(1) or is implicated in proton conduction. This chain is ATP synthase subunit delta, found in Shewanella baltica (strain OS223).